The primary structure comprises 431 residues: GTPase Obg (431 aa).

An Obg domain is found at methionine 1 to leucine 158. The OBG-type G domain occupies alanine 159–aspartate 335. Residues glycine 165–serine 172, phenylalanine 190–valine 194, aspartate 212–glycine 215, threonine 282–aspartate 285, and serine 316–isoleucine 318 contribute to the GTP site. Residues serine 172 and threonine 192 each contribute to the Mg(2+) site. Residues tyrosine 353 to aspartate 431 enclose the OCT domain.

This sequence belongs to the TRAFAC class OBG-HflX-like GTPase superfamily. OBG GTPase family. As to quaternary structure, monomer. The cofactor is Mg(2+).

The protein localises to the cytoplasm. An essential GTPase which binds GTP, GDP and possibly (p)ppGpp with moderate affinity, with high nucleotide exchange rates and a fairly low GTP hydrolysis rate. Plays a role in control of the cell cycle, stress response, ribosome biogenesis and in those bacteria that undergo differentiation, in morphogenesis control. The chain is GTPase Obg from Lactiplantibacillus plantarum (strain ATCC BAA-793 / NCIMB 8826 / WCFS1) (Lactobacillus plantarum).